The primary structure comprises 472 residues: Ribulose bisphosphate carboxylase large chain (472 aa).

The substrate site is built by N120 and T170. K172 (proton acceptor) is an active-site residue. Substrate is bound at residue K174. Residues K198, D200, and E201 each contribute to the Mg(2+) site. K198 is modified (N6-carboxylysine). H291 functions as the Proton acceptor in the catalytic mechanism. Substrate contacts are provided by R292, H324, and S376. The Interacts with RbcX2 motif lies at E461–E467.

It belongs to the RuBisCO large chain family. Type I subfamily. Heterohexadecamer of 8 large chains and 8 small chains; disulfide-linked. The disulfide link is formed within the large subunit homodimers. The exposed C-terminus binds in a cleft in the RbcX2 (shown with endogenous and Anabaena strain CA protein). RbcX2 is displaced by RbcS; as RbcX2 is removed RbcS mediates the ordering of an internal RbcL loop (Thr-64-Leu-70) in a catalytically active conformation. Mg(2+) is required as a cofactor. Post-translationally, the disulfide bond which can form in the large chain dimeric partners within the hexadecamer appears to be associated with oxidative stress and protein turnover.

The protein localises to the carboxysome. The enzyme catalyses 2 (2R)-3-phosphoglycerate + 2 H(+) = D-ribulose 1,5-bisphosphate + CO2 + H2O. The catalysed reaction is D-ribulose 1,5-bisphosphate + O2 = 2-phosphoglycolate + (2R)-3-phosphoglycerate + 2 H(+). Functionally, ruBisCO catalyzes two reactions: the carboxylation of D-ribulose 1,5-bisphosphate, the primary event in carbon dioxide fixation, as well as the oxidative fragmentation of the pentose substrate in the photorespiration process. Both reactions occur simultaneously and in competition at the same active site. The chain is Ribulose bisphosphate carboxylase large chain (cbbL) from Synechococcus sp. (strain ATCC 27144 / PCC 6301 / SAUG 1402/1) (Anacystis nidulans).